A 64-amino-acid chain; its full sequence is Conotoxin Pn-B01121 (64 aa).

The N-terminal stretch at 1–22 is a signal peptide; the sequence is MCCLPVFVILLLLIASAPSVDA. The propeptide occupies 23 to 48; it reads LPKTKDDMSLASFHDNAKRTLQILSN. Trp-63 carries the post-translational modification Tryptophan amide.

Belongs to the conotoxin T superfamily. Contains 2 disulfide bonds that can be either 'C1-C3, C2-C4' or 'C1-C4, C2-C3', since these disulfide connectivities have been observed for conotoxins with cysteine framework V (for examples, see AC P0DQQ7 and AC P81755). Expressed by the venom duct.

Its subcellular location is the secreted. The chain is Conotoxin Pn-B01121 from Conus pennaceus (Feathered cone).